The following is a 125-amino-acid chain: Large ribosomal subunit protein bL12 (125 aa).

A disordered region spans residues 96-125; that stretch reads PAPVKEGATKDEAEEIKKKIEEAGGTAELK. The span at 102 to 117 shows a compositional bias: basic and acidic residues; sequence GATKDEAEEIKKKIEE.

Belongs to the bacterial ribosomal protein bL12 family. In terms of assembly, homodimer. Part of the ribosomal stalk of the 50S ribosomal subunit. Forms a multimeric L10(L12)X complex, where L10 forms an elongated spine to which 2 to 4 L12 dimers bind in a sequential fashion. Binds GTP-bound translation factors.

Its function is as follows. Forms part of the ribosomal stalk which helps the ribosome interact with GTP-bound translation factors. Is thus essential for accurate translation. The sequence is that of Large ribosomal subunit protein bL12 from Alcanivorax borkumensis (strain ATCC 700651 / DSM 11573 / NCIMB 13689 / SK2).